The primary structure comprises 326 residues: Eukaryotic translation initiation factor 3 subunit I (326 aa).

WD repeat units lie at residues glycine 8–threonine 47, glycine 50–serine 89, methionine 145–aspartate 184, aspartate 188–threonine 227, and glycine 285–glutamate 326.

Belongs to the eIF-3 subunit I family. As to quaternary structure, component of the eukaryotic translation initiation factor 3 (eIF-3) complex. The eIF-3 complex interacts with pix.

The protein localises to the cytoplasm. Its function is as follows. Component of the eukaryotic translation initiation factor 3 (eIF-3) complex, which is involved in protein synthesis of a specialized repertoire of mRNAs and, together with other initiation factors, stimulates binding of mRNA and methionyl-tRNAi to the 40S ribosome. The eIF-3 complex specifically targets and initiates translation of a subset of mRNAs involved in cell proliferation. The chain is Eukaryotic translation initiation factor 3 subunit I from Drosophila pseudoobscura pseudoobscura (Fruit fly).